The sequence spans 279 residues: Tryptophan 2,3-dioxygenase (279 aa).

Substrate contacts are provided by residues 48 to 52 (FIIQH), Tyr110, and Arg114. A heme-binding site is contributed by His237. Thr251 contributes to the substrate binding site.

The protein belongs to the tryptophan 2,3-dioxygenase family. As to quaternary structure, homotetramer. Heme is required as a cofactor.

The catalysed reaction is L-tryptophan + O2 = N-formyl-L-kynurenine. It participates in amino-acid degradation; L-tryptophan degradation via kynurenine pathway; L-kynurenine from L-tryptophan: step 1/2. Heme-dependent dioxygenase that catalyzes the oxidative cleavage of the L-tryptophan (L-Trp) pyrrole ring and converts L-tryptophan to N-formyl-L-kynurenine. Catalyzes the oxidative cleavage of the indole moiety. This is Tryptophan 2,3-dioxygenase from Bradyrhizobium sp. (strain BTAi1 / ATCC BAA-1182).